Consider the following 309-residue polypeptide: MSKKIAVIGECMIELSEKGADVKRGFGGDTLNTSVYIARQVDPAALTVHYVTALGTDSFSQQMLDAWHGENVDTSLTQRMENRLPGLYYIETDSTGERTFYYWRNEAAAKFWLESEQSAAICEELANFDYLYLSGISLAILSPTSREKLLSLLRECRANGGKVIFDNNYRPRLWASKEETQQVYQQMLECTDIAFLTLDDEDALWGQQPVEDVIARTHNAGVKEVVVKRGADSCLVSIAGEGLVDVPAVKLPKEKVIDTTAAGDSFSAGYLAVRLTGGSAENAAKRGHLTASTVIQYRGAIIPREAMPA.

Substrate contacts are provided by residues 28 to 32, Y88, 102 to 104, and R170; these read GDTLN and YWR. ATP is bound by residues 168-170, 228-233, and 261-264; these read NYR, KRGADS, and AAGD. D264 is a substrate binding site. The active-site Proton acceptor is the D264.

Belongs to the carbohydrate kinase pfkB family.

The catalysed reaction is 2-dehydro-3-deoxy-D-gluconate + ATP = 2-dehydro-3-deoxy-6-phospho-D-gluconate + ADP + H(+). Its pathway is carbohydrate acid metabolism; 2-dehydro-3-deoxy-D-gluconate degradation; D-glyceraldehyde 3-phosphate and pyruvate from 2-dehydro-3-deoxy-D-gluconate: step 1/2. Catalyzes the phosphorylation of 2-keto-3-deoxygluconate (KDG) to produce 2-keto-3-deoxy-6-phosphogluconate (KDPG). The sequence is that of 2-dehydro-3-deoxygluconokinase (kdgK) from Escherichia coli (strain ATCC 9637 / CCM 2024 / DSM 1116 / LMG 11080 / NBRC 13500 / NCIMB 8666 / NRRL B-766 / W).